A 356-amino-acid polypeptide reads, in one-letter code: N-acyl-phosphatidylethanolamine-hydrolyzing phospholipase D 1 (356 aa).

Residues His144 and His146 each contribute to the Zn(2+) site. Tyr147 lines the an N-acyl-1,2-diacyl-sn-glycero-3-phosphoethanolamine pocket. Asp148, His149, His217, and Asp248 together coordinate Zn(2+). An N-acyl-1,2-diacyl-sn-glycero-3-phosphoethanolamine is bound at residue His286. His308 contributes to the Zn(2+) binding site.

It belongs to the NAPE-PLD family. Zn(2+) serves as cofactor. Expressed in interneurons that are in close proximity to the primary sensory neurons. Predominantly expressed in the pharynx but can also be found in cell bodies of the dorsal and ventral nerve cords.

It carries out the reaction an N-acyl-1,2-diacyl-sn-glycero-3-phosphoethanolamine + H2O = an N-acylethanolamine + a 1,2-diacyl-sn-glycero-3-phosphate + H(+). The enzyme catalyses 1,2-dihexadecanoyl-sn-glycero-3-phospho-(N-hexadecanoyl)-ethanolamine + H2O = 1,2-dihexadecanoyl-sn-glycero-3-phosphate + N-hexadecanoylethanolamine + H(+). The catalysed reaction is N-(5Z,8Z,11Z,14Z-eicosatetraenoyl)-1,2-di-(9Z-octadecenoyl)-sn-glycero-3-phosphoethanolamine + H2O = N-(5Z,8Z,11Z,14Z-eicosatetraenoyl)-ethanolamine + 1,2-di-(9Z-octadecenoyl)-sn-glycero-3-phosphate + H(+). D-type phospholipase that hydrolyzes N-acyl-phosphatidylethanolamines (NAPEs) to produce bioactive N-acylethanolamines/fatty acid ethanolamides (NAEs/FAEs) and phosphatidic acid. NAEs are bioactive lipids that are involved in diverse physiological processes such as growth and lifespan. This Caenorhabditis elegans protein is N-acyl-phosphatidylethanolamine-hydrolyzing phospholipase D 1.